Reading from the N-terminus, the 201-residue chain is Small ribosomal subunit protein uS4c (201 aa).

Positions 16–43 are disordered; sequence GALPGLTSKKPRSASDLRNQSRSGKRSQ. The S4 RNA-binding domain maps to 89–169; the sequence is MRLDNILFRL…LPKHLTLHSF (81 aa).

It belongs to the universal ribosomal protein uS4 family. As to quaternary structure, part of the 30S ribosomal subunit. Contacts protein S5. The interaction surface between S4 and S5 is involved in control of translational fidelity.

The protein localises to the plastid. It is found in the chloroplast. In terms of biological role, one of the primary rRNA binding proteins, it binds directly to 16S rRNA where it nucleates assembly of the body of the 30S subunit. Functionally, with S5 and S12 plays an important role in translational accuracy. The protein is Small ribosomal subunit protein uS4c (rps4) of Nymphaea alba (White water-lily).